Consider the following 222-residue polypeptide: MASFAASQTCFLTTNPTCLKPNSPQKSSTFLPFSAPLSSSSSFPGCGLVHVASNKKNRASFVVTNAVRELEGYVTKAQSFRFAIVVARFNEFVTRRLMEGALDTFKKYSVNEDIDVVWVPGAYELGVTAQALGKSGKYHAIVCLGAVVKGDTSHYDAVVNSASSGVLSAGLNSGVPCVFGVLTCDNMDQAINRAGGKAGNKGAESALTAIEMASLFEHHLKA.

Residues 1 to 66 constitute a chloroplast transit peptide; it reads MASFAASQTC…NRASFVVTNA (66 aa). 5-amino-6-(D-ribitylamino)uracil contacts are provided by residues Phe-89, 122–124, and 146–148; these read AYE and AVV. 151-152 provides a ligand contact to (2S)-2-hydroxy-3-oxobutyl phosphate; sequence DT. The active-site Proton donor is the His-154. Phe-179 serves as a coordination point for 5-amino-6-(D-ribitylamino)uracil. Arg-193 is a (2S)-2-hydroxy-3-oxobutyl phosphate binding site.

It belongs to the DMRL synthase family. In terms of assembly, oligomer forming an icosahedral capsid.

It localises to the plastid. The protein localises to the chloroplast. The enzyme catalyses (2S)-2-hydroxy-3-oxobutyl phosphate + 5-amino-6-(D-ribitylamino)uracil = 6,7-dimethyl-8-(1-D-ribityl)lumazine + phosphate + 2 H2O + H(+). It participates in cofactor biosynthesis; riboflavin biosynthesis; riboflavin from 2-hydroxy-3-oxobutyl phosphate and 5-amino-6-(D-ribitylamino)uracil: step 1/2. Catalyzes the formation of 6,7-dimethyl-8-ribityllumazine by condensation of 5-amino-6-(D-ribitylamino)uracil with 3,4-dihydroxy-2-butanone 4-phosphate. This is the penultimate step in the biosynthesis of riboflavin. The protein is 6,7-dimethyl-8-ribityllumazine synthase, chloroplastic of Spinacia oleracea (Spinach).